The sequence spans 431 residues: Acetylornithine aminotransferase (431 aa).

Pyridoxal 5'-phosphate-binding positions include 118-119 (GA) and Phe-157. Position 160 (Arg-160) interacts with N(2)-acetyl-L-ornithine. 251–254 (DEVQ) lines the pyridoxal 5'-phosphate pocket. An N6-(pyridoxal phosphate)lysine modification is found at Lys-284. Ser-313 provides a ligand contact to N(2)-acetyl-L-ornithine. Thr-314 serves as a coordination point for pyridoxal 5'-phosphate.

The protein belongs to the class-III pyridoxal-phosphate-dependent aminotransferase family. ArgD subfamily. Homodimer. Pyridoxal 5'-phosphate serves as cofactor.

It localises to the cytoplasm. It catalyses the reaction N(2)-acetyl-L-ornithine + 2-oxoglutarate = N-acetyl-L-glutamate 5-semialdehyde + L-glutamate. It functions in the pathway amino-acid biosynthesis; L-arginine biosynthesis; N(2)-acetyl-L-ornithine from L-glutamate: step 4/4. The chain is Acetylornithine aminotransferase from Bifidobacterium longum (strain NCC 2705).